The primary structure comprises 318 residues: Dual specificity protein phosphatase 2 (318 aa).

The 122-residue stretch at Glu27–Ser148 folds into the Rhodanese domain. In terms of domain architecture, Tyrosine-protein phosphatase spans Gly176 to Cys317. Cys261 functions as the Phosphocysteine intermediate in the catalytic mechanism.

It belongs to the protein-tyrosine phosphatase family. Non-receptor class dual specificity subfamily. Interacts with MAPK14; this interaction does not lead to catalytic activation of DUSP2 and dephosphrylation of MAPK14. In terms of tissue distribution, in hematopoietic tissues such as spleen and thymus.

The protein resides in the nucleus. The catalysed reaction is O-phospho-L-tyrosyl-[protein] + H2O = L-tyrosyl-[protein] + phosphate. It catalyses the reaction O-phospho-L-threonyl-[protein] + H2O = L-threonyl-[protein] + phosphate. Its function is as follows. Dephosphorylates both phosphorylated Thr and Tyr residues in MAPK1, and dephosphorylation of phosphotyrosine is slightly faster than that of phosphothreonine. Can dephosphorylate MAPK1. This chain is Dual specificity protein phosphatase 2, found in Mus musculus (Mouse).